We begin with the raw amino-acid sequence, 335 residues long: uncharacterized protein (335 aa).

28 to 35 (GPINSGKT) contacts ATP.

This sequence belongs to the archaeal ATPase family.

This is an uncharacterized protein from Pyrococcus abyssi (strain GE5 / Orsay).